The chain runs to 419 residues: Synaptotagmin-1 (419 aa).

Topologically, residues 1–57 (MVSESHHEALAAPPVTTVATVLPSNATEPASPGEGKEDAFSKLKEKFMNELHKIPLP) are vesicular. Asn25 carries N-linked (GlcNAc...) asparagine glycosylation. A helical membrane pass occupies residues 58 to 80 (PWALIAIAIVAVLLVLTCCFCIC). 5 S-palmitoyl cysteine lipidation sites follow: Cys75, Cys76, Cys78, Cys80, and Cys83. Over 81–419 (KKCLFKKKNK…EVDAMLAVKK (339 aa)) the chain is Cytoplasmic. Residues 108–139 (KDLGKTMKDQDDDAETGLTDGEEKEEPKEEEK) are disordered. Residues 117 to 131 (QDDDAETGLTDGEEK) are compositionally biased toward acidic residues. Thr126 is subject to Phosphothreonine. The interval 133 to 379 (EPKEEEKLGK…AIGKVFVGYN (247 aa)) is phospholipid binding. Residues 139–258 (KLGKLQYSLD…DFGHVTEEWR (120 aa)) enclose the C2 1 domain. Ca(2+)-binding residues include Leu169, Asp170, and Asp176. Tyr227 bears the Phosphotyrosine mark. Residues Asp228, Phe229, Asp230, Ser233, Lys234, and Asp236 each coordinate Ca(2+). Position 262 is a phosphoserine (Ser262). The region spanning 270 to 403 (KLGDICFSLR…NPRRPIAQWH (134 aa)) is the C2 2 domain. Ca(2+) is bound by residues Asp301 and Asp307. 2 positions are modified to phosphoserine: Ser340 and Ser342. Positions 361, 363, and 369 each coordinate Ca(2+).

This sequence belongs to the synaptotagmin family. In terms of assembly, homotetramer. Heterodimer; heterodimerizes with SYT2 in presence of calcium. Interacts with SCAMP5. Interacts with STON2. Forms a complex with SV2B, syntaxin 1 and SNAP25. Interacts with SV2A, SV2B and SV2C. Interacts with RIMS1. Interacts with PRRT2. Interacts with DNAJC5 in a phosphorylation-dependent manner. Interacts (via N-terminus) with RAB3A. Interacts with SYT12. Interacts with calmodulin. Interacts with DNM1 (via C-terminal proline-rich domain (PRD)); this interaction facilitates vesicle fission during clathrin-mediated endocytosis (CME). Requires Ca(2+) as cofactor. In terms of processing, glycosylated.

The protein localises to the cytoplasmic vesicle. It localises to the secretory vesicle membrane. Its subcellular location is the secretory vesicle. The protein resides in the synaptic vesicle membrane. It is found in the chromaffin granule membrane. The protein localises to the cytoplasm. Its function is as follows. Calcium sensor that participates in triggering neurotransmitter release at the synapse. May have a regulatory role in the membrane interactions during trafficking of synaptic vesicles at the active zone of the synapse. It binds acidic phospholipids with a specificity that requires the presence of both an acidic head group and a diacyl backbone. A Ca(2+)-dependent interaction between synaptotagmin and putative receptors for activated protein kinase C has also been reported. It can bind to at least three additional proteins in a Ca(2+)-independent manner; these are neurexins, syntaxin and AP2. Plays a role in dendrite formation by melanocytes. The protein is Synaptotagmin-1 of Macaca fascicularis (Crab-eating macaque).